Consider the following 258-residue polypeptide: Glutamate racemase (258 aa).

Substrate-binding positions include 11-12 (DS) and 43-44 (YG). C74 functions as the Proton donor/acceptor in the catalytic mechanism. 75-76 (NT) provides a ligand contact to substrate. The Proton donor/acceptor role is filled by C182. 183–184 (TH) is a binding site for substrate.

This sequence belongs to the aspartate/glutamate racemases family.

The enzyme catalyses L-glutamate = D-glutamate. Its pathway is cell wall biogenesis; peptidoglycan biosynthesis. In terms of biological role, provides the (R)-glutamate required for cell wall biosynthesis. This Leptospira borgpetersenii serovar Hardjo-bovis (strain JB197) protein is Glutamate racemase.